A 175-amino-acid chain; its full sequence is Bifunctional protein PyrR (175 aa).

Substrate is bound by residues 40–41, Arg85, 102–110, Arg135, and Val159; these read TR and DDVLYTGRT. Residues 98–110 carry the PRPP-binding motif; it reads VVIIDDVLYTGRT.

This sequence belongs to the purine/pyrimidine phosphoribosyltransferase family. PyrR subfamily. Homodimer and homohexamer; in equilibrium.

It carries out the reaction UMP + diphosphate = 5-phospho-alpha-D-ribose 1-diphosphate + uracil. Functionally, regulates transcriptional attenuation of the pyrimidine nucleotide (pyr) operon by binding in a uridine-dependent manner to specific sites on pyr mRNA. This disrupts an antiterminator hairpin in the RNA and favors formation of a downstream transcription terminator, leading to a reduced expression of downstream genes. Also displays a weak uracil phosphoribosyltransferase activity which is not physiologically significant. This chain is Bifunctional protein PyrR, found in Staphylococcus epidermidis (strain ATCC 35984 / DSM 28319 / BCRC 17069 / CCUG 31568 / BM 3577 / RP62A).